Consider the following 271-residue polypeptide: Phosphate import ATP-binding protein PstB 1 (271 aa).

The ABC transporter domain maps to 25–266; it reads LTVEHLNLYY…PTQRRTEDYI (242 aa). ATP is bound at residue 57-64; that stretch reads GPSGCGKS.

This sequence belongs to the ABC transporter superfamily. Phosphate importer (TC 3.A.1.7) family. In terms of assembly, the complex is composed of two ATP-binding proteins (PstB), two transmembrane proteins (PstC and PstA) and a solute-binding protein (PstS).

Its subcellular location is the cell inner membrane. The catalysed reaction is phosphate(out) + ATP + H2O = ADP + 2 phosphate(in) + H(+). In terms of biological role, part of the ABC transporter complex PstSACB involved in phosphate import. Responsible for energy coupling to the transport system. The protein is Phosphate import ATP-binding protein PstB 1 of Pectobacterium atrosepticum (strain SCRI 1043 / ATCC BAA-672) (Erwinia carotovora subsp. atroseptica).